The primary structure comprises 191 residues: Protein GrpE (191 aa).

It belongs to the GrpE family. In terms of assembly, homodimer.

The protein resides in the cytoplasm. Its function is as follows. Participates actively in the response to hyperosmotic and heat shock by preventing the aggregation of stress-denatured proteins, in association with DnaK and GrpE. It is the nucleotide exchange factor for DnaK and may function as a thermosensor. Unfolded proteins bind initially to DnaJ; upon interaction with the DnaJ-bound protein, DnaK hydrolyzes its bound ATP, resulting in the formation of a stable complex. GrpE releases ADP from DnaK; ATP binding to DnaK triggers the release of the substrate protein, thus completing the reaction cycle. Several rounds of ATP-dependent interactions between DnaJ, DnaK and GrpE are required for fully efficient folding. This chain is Protein GrpE, found in Listeria monocytogenes serotype 4a (strain HCC23).